Here is a 76-residue protein sequence, read N- to C-terminus: Acyl carrier protein (76 aa).

Residues 1-76 (MSIEERVKKI…SAIDYVQNNQ (76 aa)) enclose the Carrier domain. S36 carries the post-translational modification O-(pantetheine 4'-phosphoryl)serine.

Belongs to the acyl carrier protein (ACP) family. In terms of processing, 4'-phosphopantetheine is transferred from CoA to a specific serine of apo-ACP by AcpS. This modification is essential for activity because fatty acids are bound in thioester linkage to the sulfhydryl of the prosthetic group.

It localises to the cytoplasm. It participates in lipid metabolism; fatty acid biosynthesis. Its function is as follows. Carrier of the growing fatty acid chain in fatty acid biosynthesis. This Mannheimia succiniciproducens (strain KCTC 0769BP / MBEL55E) protein is Acyl carrier protein.